The sequence spans 1396 residues: DNA-directed RNA polymerase subunit beta' (1396 aa).

4 residues coordinate Zn(2+): cysteine 70, cysteine 72, cysteine 85, and cysteine 88. Aspartate 460, aspartate 462, and aspartate 464 together coordinate Mg(2+). Cysteine 814, cysteine 888, cysteine 895, and cysteine 898 together coordinate Zn(2+).

This sequence belongs to the RNA polymerase beta' chain family. As to quaternary structure, the RNAP catalytic core consists of 2 alpha, 1 beta, 1 beta' and 1 omega subunit. When a sigma factor is associated with the core the holoenzyme is formed, which can initiate transcription. It depends on Mg(2+) as a cofactor. Zn(2+) is required as a cofactor.

The enzyme catalyses RNA(n) + a ribonucleoside 5'-triphosphate = RNA(n+1) + diphosphate. In terms of biological role, DNA-dependent RNA polymerase catalyzes the transcription of DNA into RNA using the four ribonucleoside triphosphates as substrates. This chain is DNA-directed RNA polymerase subunit beta', found in Chromobacterium violaceum (strain ATCC 12472 / DSM 30191 / JCM 1249 / CCUG 213 / NBRC 12614 / NCIMB 9131 / NCTC 9757 / MK).